A 55-amino-acid chain; its full sequence is Large ribosomal subunit protein bL33 (55 aa).

This sequence belongs to the bacterial ribosomal protein bL33 family.

This Escherichia coli (strain K12 / DH10B) protein is Large ribosomal subunit protein bL33.